A 132-amino-acid chain; its full sequence is Small ribosomal subunit protein uS8 (132 aa).

Belongs to the universal ribosomal protein uS8 family. In terms of assembly, part of the 30S ribosomal subunit. Contacts proteins S5 and S12.

Its function is as follows. One of the primary rRNA binding proteins, it binds directly to 16S rRNA central domain where it helps coordinate assembly of the platform of the 30S subunit. In Streptococcus uberis (strain ATCC BAA-854 / 0140J), this protein is Small ribosomal subunit protein uS8.